The chain runs to 317 residues: Ribosomal protein L11 methyltransferase (317 aa).

S-adenosyl-L-methionine is bound by residues threonine 158, glycine 179, aspartate 201, and asparagine 244.

It belongs to the methyltransferase superfamily. PrmA family.

It is found in the cytoplasm. It catalyses the reaction L-lysyl-[protein] + 3 S-adenosyl-L-methionine = N(6),N(6),N(6)-trimethyl-L-lysyl-[protein] + 3 S-adenosyl-L-homocysteine + 3 H(+). Functionally, methylates ribosomal protein L11. This chain is Ribosomal protein L11 methyltransferase, found in Streptococcus uberis (strain ATCC BAA-854 / 0140J).